We begin with the raw amino-acid sequence, 213 residues long: Orotate phosphoribosyltransferase (213 aa).

A 5-phospho-alpha-D-ribose 1-diphosphate-binding site is contributed by K26. 34-35 (FF) contributes to the orotate binding site. Residues 72-73 (YK), R99, K100, K103, H105, and 124-132 (DDVITAGTA) each bind 5-phospho-alpha-D-ribose 1-diphosphate. T128 and R156 together coordinate orotate.

This sequence belongs to the purine/pyrimidine phosphoribosyltransferase family. PyrE subfamily. Homodimer. It depends on Mg(2+) as a cofactor.

The catalysed reaction is orotidine 5'-phosphate + diphosphate = orotate + 5-phospho-alpha-D-ribose 1-diphosphate. It functions in the pathway pyrimidine metabolism; UMP biosynthesis via de novo pathway; UMP from orotate: step 1/2. Its function is as follows. Catalyzes the transfer of a ribosyl phosphate group from 5-phosphoribose 1-diphosphate to orotate, leading to the formation of orotidine monophosphate (OMP). The protein is Orotate phosphoribosyltransferase of Enterobacter sp. (strain 638).